We begin with the raw amino-acid sequence, 576 residues long: MEYRLIGDNDYNFDPLATILKNRGIEDPKLFVNVDQSSVIHYSKLNNIDKAADCLIRHLNNKNKLFVQVDSDVDGYTSSSIIINYIKKICPKANIHYRIQDGKEHGIFIDTIPDDVDLVIIPDAGSSQFEEHEALNKRGTEIIVIDHHECERVSEHAIVVNNQLSPNYSNKTLTGAGMAYKFCQAIDEKLNKNEAEQFLDLVSIGNIADSADSRNLETRYFMNEGLKKIKHPLLKKLFKKQEFSTKGDKSIQNTQFFINPLINAAIRVGSSEEKDQMMRAFLLSKEKVPYKKRGQSETELVSIHEDTVRILGNLKAKQKRIVDAAGVEIKNRIEEKSLTANKVLIVYIEGILDKSLTGLVANQLAEEYKKPVLLARNDPEKGKDILSGSIRGYDKGFIKDFKKELIDTGLFEFVEGHPNAAGFAIKRQNLILVNKVLNEKFKDINIEEDIQNVDFEIPAKRLRKEFILQLDGYKDYWGYKVEEPLIAITDLEIEVEQIEHLGKKNKTTVKFKHGDIEYIRFKSDENYFNQLTASNGTLVINVIGKAKANEYKGKKTPQIEIYELEVVRTKQKELVF.

A Phosphotyrosine modification is found at Tyr-473.

The protein belongs to the RecJ family.

Its function is as follows. Putative single-stranded-DNA-specific exonuclease. This is Putative SPbeta prophage-derived single-strand DNA-specific exonuclease YorK (yorK) from Bacillus subtilis (strain 168).